Here is a 2760-residue protein sequence, read N- to C-terminus: A-kinase anchor protein 13 (2760 aa).

8 disordered regions span residues 356-388 (CSHK…QDSC), 442-517 (PDAR…EPKQ), 530-577 (AAGA…VLPA), 604-711 (SSLD…AAHN), 729-857 (EKDL…EQEG), 890-940 (GGSI…QEIS), 954-1029 (EKAL…ASEA), and 1132-1162 (EGTD…DLPT). Over residues 378-388 (DSRSASHQDSC) the composition is skewed to polar residues. Positions 442–454 (PDARQHSSGRELP) are enriched in basic and acidic residues. Residues 482-504 (QNSKPQVGESAKERLENSDISSA) form an important for interaction with PRKAR2A region. Over residues 530 to 547 (AAGADAPAEASPAWSPEE) the composition is skewed to low complexity. Composition is skewed to polar residues over residues 620–638 (KQNS…SQAP), 654–664 (CPQSTETSSGG), and 701–711 (DTVTSDTAAHN). Over residues 769–780 (SSFSLASSPESE) the composition is skewed to low complexity. S776 carries the phosphoserine modification. T801 is modified (phosphothreonine). Residues 814-826 (PDGRDLNDTDKVG) are compositionally biased toward basic and acidic residues. Polar residues predominate over residues 839 to 849 (ELQTSMGNTSP). Residues 906–931 (GKDKATKCPSVKEDVHSSEMSREDQR) show a composition bias toward basic and acidic residues. Residue T932 is modified to Phosphothreonine. 2 stretches are compositionally biased toward polar residues: residues 958–972 (QHSN…CLQT) and 1001–1020 (TSLS…SGSS). A Phosphoserine modification is found at S962. Residues 1213-1228 (SIEETATRIVEAVIKQ) are important for interaction with PRKAR2A. Disordered stretches follow at residues 1392 to 1411 (GVLQ…PSDE), 1425 to 1508 (LLCD…VPAN), and 1520 to 1539 (SPFR…DAEM). Low complexity predominate over residues 1428–1439 (DTTGSSSSTDDT). Positions 1449–1472 (GSDVSLPQTSKLNRSRNHQSSNGF) are enriched in polar residues. S1450, S1468, S1501, S1526, and S1585 each carry phosphoserine. The tract at residues 1546–1695 (QVLGHVVRRP…SRPFHSASAN (150 aa)) is important for interaction with MAP2K3. Residues 1592-1628 (GGGVGNKPSSSLEISSANSSELRNPFSGEEQRSSLMS) form a disordered region. A compositionally biased stretch (low complexity) spans 1600-1611 (SSSLEISSANSS). Phosphoserine is present on residues S1625, S1628, and S1630. Position 1654 is an N6-methyllysine (K1654). Residues 1733 to 1755 (RNKMSSSKKSKKEKDKKTLNGHT) are disordered. The segment at 1753 to 1800 (GHTFSPIPIVGPINCSQCMKPFTNKDAYTCASCGAFVHKGCRENLASC) adopts a Phorbol-ester/DAG-type zinc-finger fold. Phosphoserine occurs at positions 1838, 1857, and 1891. The interval 1881–2760 (MSNTWKFLSH…VPAEGEEIFC (880 aa)) is interaction with ESR1. Position 1892 is a phosphothreonine (T1892). Residues S1894 and S1907 each carry the phosphoserine modification. The DH domain occupies 1956 to 2153 (KRQEVIYELM…KDVIGAVDSK (198 aa)). The region spanning 2176–2280 (MRMKSGQMFA…WIQIIQDTIN (105 aa)) is the PH domain. S2292 and S2345 each carry phosphoserine. The stretch at 2292–2329 (SENEEEKRLLDTKARELKEQLQQKDQQILLLLEEKEMI) forms a coiled coil. T2415 bears the Phosphothreonine mark. A disordered region spans residues 2422–2450 (HQLNASKGGEKEEGDDGQDLRRTESDSGL). Basic and acidic residues predominate over residues 2439–2450 (QDLRRTESDSGL). Phosphoserine is present on residues S2511 and S2514. Residues 2516 to 2632 (LIEQEKQRSL…LSQRQMEQDL (117 aa)) are a coiled coil. Disordered stretches follow at residues 2568 to 2588 (AERE…REEL) and 2660 to 2760 (TPSI…EIFC). Composition is skewed to polar residues over residues 2660–2684 (TPSI…SISR) and 2696–2711 (SSAS…SQAP). The residue at position 2676 (S2676) is a Phosphoserine. The span at 2743–2752 (PGDGPAPEVP) shows a compositional bias: low complexity.

Interacts with the cAMP-dependent protein kinase (PKA) holoenzyme and with the regulatory subunit PRKAR2A. Interacts with RHOA. Also interacts with RHOB and RHOC. Identified in a ternary complex with RHOA and PRKAR2A. Identified in a complex with NR3C1 and RHOA. Interacts with BRAF and KSR1. Identified in a complex with BRAF and KSR1. Component of a signaling complex containing at least AKAP13, PKN1, MAPK14, ZAK and MAP2K3. Within this complex, AKAP13 interacts directly with PKN1, which in turn recruits MAPK14, MAP2K3 and ZAK. Interacts (phosphorylated form) with YWHAB and YWHAZ. Interaction with YWHAB inhibits activation of RHOA, interferes with PKN1 binding and activation of MAP kinases. Interacts with GNA12. Interacts with IKBKB. Interacts with ESR1, THRA, PPARA and NME2. Interacts (via the C-terminal domain after the PH domain) with MEF2C and RXRB. Interacts (via the C-terminal domain after the PH domain) with PRKD1. Detected in bone osteoblasts (at protein level).

The protein resides in the cytoplasm. It is found in the cytosol. The protein localises to the cell cortex. It localises to the nucleus. Its subcellular location is the membrane. Its function is as follows. Scaffold protein that plays an important role in assembling signaling complexes downstream of several types of G protein-coupled receptors. Activates RHOA in response to signaling via G protein-coupled receptors via its function as Rho guanine nucleotide exchange factor. May also activate other Rho family members. Part of a kinase signaling complex that links ADRA1A and ADRA1B adrenergic receptor signaling to the activation of downstream p38 MAP kinases, such as MAPK11 and MAPK14. Part of a signaling complex that links ADRA1B signaling to the activation of RHOA and IKBKB/IKKB, leading to increased NF-kappa-B transcriptional activity. Part of a RHOA-dependent signaling cascade that mediates responses to lysophosphatidic acid (LPA), a signaling molecule that activates G-protein coupled receptors and potentiates transcriptional activation of the glucocorticoid receptor NR3C1. Part of a signaling cascade that stimulates MEF2C-dependent gene expression in response to lysophosphatidic acid (LPA). Part of a signaling pathway that activates MAPK11 and/or MAPK14 and leads to increased transcription activation of the estrogen receptors ESR1 and ESR2. Part of a signaling cascade that links cAMP and EGFR signaling to BRAF signaling and to PKA-mediated phosphorylation of KSR1, leading to the activation of downstream MAP kinases, such as MAPK1 or MAPK3. Functions as a scaffold protein that anchors cAMP-dependent protein kinase (PKA) and PRKD1. This promotes activation of PRKD1, leading to increased phosphorylation of HDAC5 and ultimately cardiomyocyte hypertrophy. Has no guanine nucleotide exchange activity on CDC42, Ras or Rac. Required for normal embryonic heart development, and in particular for normal sarcomere formation in the developing cardiomyocytes. Plays a role in cardiomyocyte growth and cardiac hypertrophy in response to activation of the beta-adrenergic receptor by phenylephrine or isoproterenol. Required for normal adaptive cardiac hypertrophy in response to pressure overload. Plays a role in osteogenesis. This chain is A-kinase anchor protein 13, found in Rattus norvegicus (Rat).